The sequence spans 201 residues: MELVLKDAQSALTVSETTFGRDFNEALVHQVVVAYAAGARQGTRAQKTRAEVTGSGKKPWRQKGTGRARSGSIKSPIWRSGGVTFAARPQDHSQKVNKKMYRGALKSILSELVRQDRLIVVETFSVEAPKTKLLAQKLKDMALEDVLIITGELDENLFLAARNLHKVDVRDATGIDPVSLIAFDKVVMTADAVKQVEEMLA.

The segment at 44 to 71 (RAQKTRAEVTGSGKKPWRQKGTGRARSG) is disordered.

This sequence belongs to the universal ribosomal protein uL4 family. As to quaternary structure, part of the 50S ribosomal subunit.

One of the primary rRNA binding proteins, this protein initially binds near the 5'-end of the 23S rRNA. It is important during the early stages of 50S assembly. It makes multiple contacts with different domains of the 23S rRNA in the assembled 50S subunit and ribosome. Functionally, forms part of the polypeptide exit tunnel. This Enterobacter sp. (strain 638) protein is Large ribosomal subunit protein uL4.